We begin with the raw amino-acid sequence, 373 residues long: NADPH-dependent 3-keto-steroid reductase Hsd3b5 (373 aa).

Residues 10–15 (GAGGFL), Tyr-155, and Lys-159 contribute to the NADP(+) site. Lys-159 acts as the Proton donor in catalysis. A helical membrane pass occupies residues 288 to 308 (LSLLYWLAFLLETVSFLLRPV). Lys-350 is subject to N6-acetyllysine.

This sequence belongs to the 3-beta-HSD family. As to expression, expressed in the male liver, starting in late puberty.

The protein localises to the endoplasmic reticulum membrane. The protein resides in the mitochondrion membrane. The enzyme catalyses a 3beta-hydroxysteroid + NADP(+) = a 3-oxosteroid + NADPH + H(+). It catalyses the reaction 5alpha-androstane-3beta,17beta-diol + NADP(+) = 17beta-hydroxy-5alpha-androstan-3-one + NADPH + H(+). It functions in the pathway steroid metabolism. Functionally, responsible for the reduction of the oxo group on the C-3 of 5alpha-androstane steroids. Catalyzes the conversion of dihydrotestosterone to its inactive form 5alpha-androstanediol, that does not bind androgen receptor/AR. Does not function as an isomerase. The chain is NADPH-dependent 3-keto-steroid reductase Hsd3b5 from Mus musculus (Mouse).